The following is a 267-amino-acid chain: NLP effector protein 6 (267 aa).

The first 35 residues, 1 to 35, serve as a signal peptide directing secretion; sequence MRTTSPYSHCSHVEMNAGAFVTMLLVALSVCVAAA. The N-linked (GlcNAc...) asparagine glycan is linked to N114. The short motif at 117–127 is the Conserved undecapeptide motif element; that stretch reads AIMYAWYFPKR. The Conserved heptapeptide motif motif lies at 134–140; the sequence is IQRHDWK. N192 carries N-linked (GlcNAc...) asparagine glycosylation.

Belongs to the Necrosis inducing protein (NPP1) family.

The protein localises to the secreted. Probable secreted effector that may act as a pathogen-associated molecular pattern (PAMP) recognized by the plant immune system. This Plasmopara viticola (Downy mildew of grapevine) protein is NLP effector protein 6.